Here is a 77-residue protein sequence, read N- to C-terminus: Acyl carrier protein (77 aa).

The Carrier domain maps to 1–76 (MDREQRIKEI…DVINYLNEKL (76 aa)). Position 36 is an O-(pantetheine 4'-phosphoryl)serine (Ser-36).

Belongs to the acyl carrier protein (ACP) family. In terms of processing, 4'-phosphopantetheine is transferred from CoA to a specific serine of apo-ACP by AcpS. This modification is essential for activity because fatty acids are bound in thioester linkage to the sulfhydryl of the prosthetic group.

The protein resides in the cytoplasm. Its pathway is lipid metabolism; fatty acid biosynthesis. Functionally, carrier of the growing fatty acid chain in fatty acid biosynthesis. In Hydrogenobaculum sp. (strain Y04AAS1), this protein is Acyl carrier protein.